Reading from the N-terminus, the 846-residue chain is Sucrose synthase 6 (846 aa).

A GT-B glycosyltransferase region spans residues 276 to 755 (CVFTVVIFSI…GLQRIYECYT (480 aa)).

The protein belongs to the glycosyltransferase 1 family. Plant sucrose synthase subfamily.

It catalyses the reaction an NDP-alpha-D-glucose + D-fructose = a ribonucleoside 5'-diphosphate + sucrose + H(+). Sucrose-cleaving enzyme that provides UDP-glucose and fructose for various metabolic pathways. This Oryza sativa subsp. japonica (Rice) protein is Sucrose synthase 6 (SUS6).